Reading from the N-terminus, the 177-residue chain is Large ribosomal subunit protein uL16m (177 aa).

It belongs to the universal ribosomal protein uL16 family.

The protein localises to the mitochondrion. This chain is Large ribosomal subunit protein uL16m (RPL16), found in Brassica napus (Rape).